A 383-amino-acid polypeptide reads, in one-letter code: Acetylornithine deacetylase (383 aa).

H80 is a Zn(2+) binding site. D82 is an active-site residue. D112 lines the Zn(2+) pocket. The active site involves E144. E145, E169, and H355 together coordinate Zn(2+).

The protein belongs to the peptidase M20A family. ArgE subfamily. In terms of assembly, homodimer. Zn(2+) serves as cofactor. Co(2+) is required as a cofactor. It depends on glutathione as a cofactor.

It localises to the cytoplasm. It catalyses the reaction N(2)-acetyl-L-ornithine + H2O = L-ornithine + acetate. The protein operates within amino-acid biosynthesis; L-arginine biosynthesis; L-ornithine from N(2)-acetyl-L-ornithine (linear): step 1/1. Catalyzes the hydrolysis of the amide bond of N(2)-acetylated L-amino acids. Cleaves the acetyl group from N-acetyl-L-ornithine to form L-ornithine, an intermediate in L-arginine biosynthesis pathway, and a branchpoint in the synthesis of polyamines. This chain is Acetylornithine deacetylase, found in Escherichia coli O9:H4 (strain HS).